A 364-amino-acid polypeptide reads, in one-letter code: Glycosyltransferase 8 domain-containing protein 1 (364 aa).

The Cytoplasmic portion of the chain corresponds to methionine 1 to histidine 5. Residues isoleucine 6–glycine 26 form a helical; Signal-anchor for type II membrane protein membrane-spanning segment. The Lumenal portion of the chain corresponds to leucine 27–glutamate 364. 3 N-linked (GlcNAc...) asparagine glycosylation sites follow: asparagine 102, asparagine 247, and asparagine 255.

This sequence belongs to the glycosyltransferase 8 family.

It localises to the membrane. This Xenopus laevis (African clawed frog) protein is Glycosyltransferase 8 domain-containing protein 1 (glt8d1).